The chain runs to 609 residues: UvrABC system protein C (609 aa).

In terms of domain architecture, GIY-YIG spans 19 to 97; that stretch reads ISPGCYLWKS…IKKHNPRFNV (79 aa). Positions 208-243 constitute a UVR domain; sequence ESLVGDLSIKMSASSNRMDFEKAARYRDMLQRIQNF.

The protein belongs to the UvrC family. As to quaternary structure, interacts with UvrB in an incision complex.

It localises to the cytoplasm. The UvrABC repair system catalyzes the recognition and processing of DNA lesions. UvrC both incises the 5' and 3' sides of the lesion. The N-terminal half is responsible for the 3' incision and the C-terminal half is responsible for the 5' incision. The polypeptide is UvrABC system protein C (Leptospira borgpetersenii serovar Hardjo-bovis (strain JB197)).